A 613-amino-acid chain; its full sequence is RNA polymerase-associated protein RTF1 homolog (613 aa).

Disordered stretches follow at residues 1-90 (MSSS…DKAR) and 121-247 (QQLA…KDKI). Positions 55-68 (PAKKKTLTKRKRRA) are enriched in basic residues. The segment covering 72–81 (SDDDQVDDDL) has biased composition (acidic residues). A compositionally biased stretch (basic and acidic residues) spans 167-176 (AAFHRPSDIN). Residues 175-209 (INRKHKEKNAMDALKNKRKEIEKKNAKNEALSIDA) are a coiled coil. Positions 215–235 (SGSSSSSSSSESSRSSSSSRE) are enriched in low complexity. Over residues 236–247 (SSPERVSEKDKI) the composition is skewed to basic and acidic residues. One can recognise a Plus3 domain in the interval 252–383 (VDGLSELRRA…KKQDIEKAIN (132 aa)). Residues 425–462 (RGDIREAEQIQTKIDEIERQADELEKERSKSISAIAFI) adopt a coiled-coil conformation. 2 disordered regions span residues 485–549 (SQDD…KTDI) and 564–613 (LKDF…SSAV). The span at 510-521 (TLSASSSTTNLS) shows a compositional bias: low complexity. Residues 569–586 (TPESSGNKRPSISSSKGV) are compositionally biased toward polar residues. Positions 602–613 (GSSTSAAPSSAV) are enriched in low complexity.

As to quaternary structure, component of the PAF1 complex which consists of at least cdc-73, ctr-9, leo-1, pafo-1 and rtfo-1.

The protein localises to the nucleus. Its function is as follows. Component of the PAF1 complex which is a multifunctional complex involved in transcription initiation via genetic interactions with TATA-binding proteins, elongation and transcription-coupled histone modification. The chain is RNA polymerase-associated protein RTF1 homolog from Caenorhabditis elegans.